A 277-amino-acid polypeptide reads, in one-letter code: NH(3)-dependent NAD(+) synthetase (277 aa).

Residue 47–54 coordinates ATP; the sequence is GISGGQDS. Aspartate 53 contacts Mg(2+). Arginine 141 is a binding site for deamido-NAD(+). Residue threonine 161 coordinates ATP. Residue glutamate 166 participates in Mg(2+) binding. Positions 174 and 181 each coordinate deamido-NAD(+). ATP contacts are provided by lysine 190 and threonine 212. 261–262 is a binding site for deamido-NAD(+); the sequence is HK.

Belongs to the NAD synthetase family. As to quaternary structure, homodimer.

The catalysed reaction is deamido-NAD(+) + NH4(+) + ATP = AMP + diphosphate + NAD(+) + H(+). Its pathway is cofactor biosynthesis; NAD(+) biosynthesis; NAD(+) from deamido-NAD(+) (ammonia route): step 1/1. Its function is as follows. Catalyzes the ATP-dependent amidation of deamido-NAD to form NAD. Uses ammonia as a nitrogen source. In Lactobacillus gasseri (strain ATCC 33323 / DSM 20243 / BCRC 14619 / CIP 102991 / JCM 1131 / KCTC 3163 / NCIMB 11718 / NCTC 13722 / AM63), this protein is NH(3)-dependent NAD(+) synthetase.